The primary structure comprises 117 residues: Ribosome-binding factor A (117 aa).

The protein belongs to the RbfA family. Monomer. Binds 30S ribosomal subunits, but not 50S ribosomal subunits or 70S ribosomes.

Its subcellular location is the cytoplasm. In terms of biological role, one of several proteins that assist in the late maturation steps of the functional core of the 30S ribosomal subunit. Associates with free 30S ribosomal subunits (but not with 30S subunits that are part of 70S ribosomes or polysomes). Required for efficient processing of 16S rRNA. May interact with the 5'-terminal helix region of 16S rRNA. The sequence is that of Ribosome-binding factor A from Bacillus licheniformis (strain ATCC 14580 / DSM 13 / JCM 2505 / CCUG 7422 / NBRC 12200 / NCIMB 9375 / NCTC 10341 / NRRL NRS-1264 / Gibson 46).